Consider the following 457-residue polypeptide: Siroheme synthase (457 aa).

A precorrin-2 dehydrogenase /sirohydrochlorin ferrochelatase region spans residues 1–204 (MDHLPIFCQL…NDQKAITETT (204 aa)). Residues 22-23 (DV) and 43-44 (LA) contribute to the NAD(+) site. Position 128 is a phosphoserine (Ser128). The segment at 216 to 457 (GEVVLVGAGP…RDKLNWFSNH (242 aa)) is uroporphyrinogen-III C-methyltransferase. Pro225 contributes to the S-adenosyl-L-methionine binding site. Asp248 serves as the catalytic Proton acceptor. Lys270 serves as the catalytic Proton donor. S-adenosyl-L-methionine-binding positions include 301–303 (GGD), Ile306, 331–332 (TA), Met382, and Gly411.

It in the N-terminal section; belongs to the precorrin-2 dehydrogenase / sirohydrochlorin ferrochelatase family. This sequence in the C-terminal section; belongs to the precorrin methyltransferase family.

It catalyses the reaction uroporphyrinogen III + 2 S-adenosyl-L-methionine = precorrin-2 + 2 S-adenosyl-L-homocysteine + H(+). It carries out the reaction precorrin-2 + NAD(+) = sirohydrochlorin + NADH + 2 H(+). The enzyme catalyses siroheme + 2 H(+) = sirohydrochlorin + Fe(2+). Its pathway is cofactor biosynthesis; adenosylcobalamin biosynthesis; precorrin-2 from uroporphyrinogen III: step 1/1. The protein operates within cofactor biosynthesis; adenosylcobalamin biosynthesis; sirohydrochlorin from precorrin-2: step 1/1. It participates in porphyrin-containing compound metabolism; siroheme biosynthesis; precorrin-2 from uroporphyrinogen III: step 1/1. It functions in the pathway porphyrin-containing compound metabolism; siroheme biosynthesis; siroheme from sirohydrochlorin: step 1/1. Its pathway is porphyrin-containing compound metabolism; siroheme biosynthesis; sirohydrochlorin from precorrin-2: step 1/1. Its function is as follows. Multifunctional enzyme that catalyzes the SAM-dependent methylations of uroporphyrinogen III at position C-2 and C-7 to form precorrin-2 via precorrin-1. Then it catalyzes the NAD-dependent ring dehydrogenation of precorrin-2 to yield sirohydrochlorin. Finally, it catalyzes the ferrochelation of sirohydrochlorin to yield siroheme. The chain is Siroheme synthase from Escherichia coli O7:K1 (strain IAI39 / ExPEC).